The following is a 161-amino-acid chain: Ribonuclease H (161 aa).

The region spanning 5-149 is the RNase H type-1 domain; that stretch reads EKLAIAAATD…VDAIAVAFSK (145 aa). 4 residues coordinate Mg(2+): Asp-14, Glu-53, Asp-78, and Asp-141.

The protein belongs to the RNase H family. In terms of assembly, monomer. It depends on Mg(2+) as a cofactor.

The protein localises to the cytoplasm. The catalysed reaction is Endonucleolytic cleavage to 5'-phosphomonoester.. Its function is as follows. Endonuclease that specifically degrades the RNA of RNA-DNA hybrids. The polypeptide is Ribonuclease H (Prochlorococcus marinus (strain NATL1A)).